The chain runs to 342 residues: S-adenosylmethionine:tRNA ribosyltransferase-isomerase (342 aa).

Belongs to the QueA family. Monomer.

It localises to the cytoplasm. The catalysed reaction is 7-aminomethyl-7-carbaguanosine(34) in tRNA + S-adenosyl-L-methionine = epoxyqueuosine(34) in tRNA + adenine + L-methionine + 2 H(+). Its pathway is tRNA modification; tRNA-queuosine biosynthesis. Functionally, transfers and isomerizes the ribose moiety from AdoMet to the 7-aminomethyl group of 7-deazaguanine (preQ1-tRNA) to give epoxyqueuosine (oQ-tRNA). This chain is S-adenosylmethionine:tRNA ribosyltransferase-isomerase, found in Streptococcus sanguinis (strain SK36).